Here is a 643-residue protein sequence, read N- to C-terminus: Protein disulfide-isomerase A4 (643 aa).

A signal peptide spans 1-20 (MRPRKAWMLVLLLALVQLLA). 2 consecutive Thioredoxin domains span residues 21–168 (VASA…EVSQ) and 170–300 (NWTP…EFLK). Residues 24–54 (AGAPDEDSTDKEDAIEEDEEEDEDDDDDDDD) form a disordered region. Positions 27-54 (PDEDSTDKEDAIEEDEEEDEDDDDDDDD) are enriched in acidic residues. Residues 90–93 (CGHC) carry the CXXC motif. Disulfide bonds link C90–C93 and C205–C208. Position 365 is an N6-acetyllysine (K365). A Thioredoxin 3 domain is found at 503–634 (FKKGKLKPVI…LSKFIEEHAT (132 aa)). Residues 553–556 (CGHC) carry the CXXC motif. A disulfide bond links C553 and C556. The Prevents secretion from ER signature appears at 640-643 (KEEL).

Belongs to the protein disulfide isomerase family. As to quaternary structure, part of a large chaperone multiprotein complex comprising DNAJB11, HSP90B1, HSPA5, HYOU, PDIA2, PDIA4, PDIA6, PPIB, SDF2L1, UGGT1 and very small amounts of ERP29, but not, or at very low levels, CALR nor CANX. Component of a complex containing at least CRELD2, MANF, MATN3 and PDIA4.

The protein localises to the endoplasmic reticulum lumen. Its subcellular location is the melanosome. It catalyses the reaction Catalyzes the rearrangement of -S-S- bonds in proteins.. This is Protein disulfide-isomerase A4 (PDIA4) from Bos taurus (Bovine).